Here is a 125-residue protein sequence, read N- to C-terminus: Small ribosomal subunit protein uS13 (125 aa).

The segment at 91-125 (HRRSLPVRGQNTQTNARTRKGKRKTVAGKKKAARK) is disordered. The span at 107–125 (RTRKGKRKTVAGKKKAARK) shows a compositional bias: basic residues.

Belongs to the universal ribosomal protein uS13 family. As to quaternary structure, part of the 30S ribosomal subunit. Forms a loose heterodimer with protein S19. Forms two bridges to the 50S subunit in the 70S ribosome.

Functionally, located at the top of the head of the 30S subunit, it contacts several helices of the 16S rRNA. In the 70S ribosome it contacts the 23S rRNA (bridge B1a) and protein L5 of the 50S subunit (bridge B1b), connecting the 2 subunits; these bridges are implicated in subunit movement. Contacts the tRNAs in the A and P-sites. This Chlorobium phaeovibrioides (strain DSM 265 / 1930) (Prosthecochloris vibrioformis (strain DSM 265)) protein is Small ribosomal subunit protein uS13.